We begin with the raw amino-acid sequence, 274 residues long: tRNA-cytidine(32) 2-sulfurtransferase (274 aa).

A PP-loop motif motif is present at residues 40–45 (SGGKDS). Residues Cys-115, Cys-118, and Cys-206 each contribute to the [4Fe-4S] cluster site.

Belongs to the TtcA family. In terms of assembly, homodimer. Requires Mg(2+) as cofactor. The cofactor is [4Fe-4S] cluster.

The protein resides in the cytoplasm. The enzyme catalyses cytidine(32) in tRNA + S-sulfanyl-L-cysteinyl-[cysteine desulfurase] + AH2 + ATP = 2-thiocytidine(32) in tRNA + L-cysteinyl-[cysteine desulfurase] + A + AMP + diphosphate + H(+). The protein operates within tRNA modification. Functionally, catalyzes the ATP-dependent 2-thiolation of cytidine in position 32 of tRNA, to form 2-thiocytidine (s(2)C32). The sulfur atoms are provided by the cysteine/cysteine desulfurase (IscS) system. The polypeptide is tRNA-cytidine(32) 2-sulfurtransferase (Pseudomonas fluorescens (strain SBW25)).